We begin with the raw amino-acid sequence, 428 residues long: Histidine--tRNA ligase (428 aa).

This sequence belongs to the class-II aminoacyl-tRNA synthetase family. In terms of assembly, homodimer.

Its subcellular location is the cytoplasm. The enzyme catalyses tRNA(His) + L-histidine + ATP = L-histidyl-tRNA(His) + AMP + diphosphate + H(+). The chain is Histidine--tRNA ligase from Halalkalibacterium halodurans (strain ATCC BAA-125 / DSM 18197 / FERM 7344 / JCM 9153 / C-125) (Bacillus halodurans).